The primary structure comprises 268 residues: AN1-type zinc finger protein 1 (268 aa).

Alanine 2 is subject to N-acetylalanine. 2 AN1-type zinc fingers span residues 4–52 and 58–106; these read LDIG…VVKE and EHKS…VAKP. Cysteine 10, cysteine 15, cysteine 25, cysteine 28, cysteine 33, histidine 36, histidine 42, cysteine 44, cysteine 64, cysteine 69, cysteine 79, cysteine 82, cysteine 87, histidine 90, histidine 96, and cysteine 98 together coordinate Zn(2+). The segment at 160-260 is ubiquitin-like; that stretch reads QTERTYFQVY…EYLNDEEQFL (101 aa).

As to quaternary structure, associates with the 26S proteasome; this association occurs upon exposure to arsenite and is reduced in the presence of ATP. Interacts (via AN1-type 1 and 2 zinc fingers) with PSMD1; this interaction is increased upon arsenite treatment and occurs in an ATP-independent manner. Interacts with PSMC4. Interacts with PSMA1. Interacts (via its ubiquitin-like region) with VCP; this interaction occurs in an arsenite-dependent manner and is necessary for the recruitment of the ubiquitin-selective ATPase VCP to stress granules (SGs).

It localises to the cytoplasm. Its subcellular location is the stress granule. Functionally, plays a role in the regulation of cytoplasmic stress granules (SGs) turnover. SGs are dynamic and transient cytoplasmic ribonucleoprotein assemblies important for cellular protein homeostasis when protein production is suspended after acute exogenous stress. Associates with SGs and is involved in the efficient and specific arsenite-induced clearance process of SGs through the recruitment of the ubiquitin-selective ATPase VCP and the 26S proteasome. This process requires both complexes for efficient degradation of damaged ubiquitinated SG proteins during recovery from arsenite stress, and hence avoiding aberrant cytoplasmic SGs degradation via autophagy. The sequence is that of AN1-type zinc finger protein 1 from Mus musculus (Mouse).